Here is a 236-residue protein sequence, read N- to C-terminus: Transcriptional activator protein SolR (236 aa).

The HTH luxR-type domain occupies 169 to 234 (VPESNAVLTT…QAVVKAIATG (66 aa)). A DNA-binding region (H-T-H motif) is located at residues 193–212 (AYEIGQILRISERTVNFHVN).

It belongs to the autoinducer-regulated transcriptional regulatory protein family.

This is Transcriptional activator protein SolR (solR) from Ralstonia solanacearum (Pseudomonas solanacearum).